Consider the following 412-residue polypeptide: Proteasome-activating nucleotidase (412 aa).

Positions 15 to 72 form a coiled coil; that stretch reads EDLYRYLLERVTNLEDRNTELREQLRQIEADKRYLETQKVRYEREVRKFKGEIEQMKS. ATP-binding positions include 197–202 and histidine 336; that span reads GTGKTL. The tract at residues 410-412 is docks into pockets in the proteasome alpha-ring to cause gate opening; it reads MFA.

Belongs to the AAA ATPase family. Homohexamer. The hexameric complex has a two-ring architecture resembling a top hat that caps the 20S proteasome core at one or both ends. Upon ATP-binding, the C-terminus of PAN interacts with the alpha-rings of the proteasome core by binding to the intersubunit pockets.

It localises to the cytoplasm. Functionally, ATPase which is responsible for recognizing, binding, unfolding and translocation of substrate proteins into the archaeal 20S proteasome core particle. Is essential for opening the gate of the 20S proteasome via an interaction with its C-terminus, thereby allowing substrate entry and access to the site of proteolysis. Thus, the C-termini of the proteasomal ATPase function like a 'key in a lock' to induce gate opening and therefore regulate proteolysis. Unfolding activity requires energy from ATP hydrolysis, whereas ATP binding alone promotes ATPase-20S proteasome association which triggers gate opening, and supports translocation of unfolded substrates. The polypeptide is Proteasome-activating nucleotidase (Methanosphaerula palustris (strain ATCC BAA-1556 / DSM 19958 / E1-9c)).